A 467-amino-acid chain; its full sequence is Probable glycerol-3-phosphate dehydrogenase [NAD(+)] 2, cytosolic (467 aa).

Residues 47–52, K195, and A234 contribute to the NAD(+) site; that span reads GAGAWG. K195 is a binding site for substrate. K284 serves as the catalytic Proton acceptor. Positions 346 and 374 each coordinate NAD(+). A substrate-binding site is contributed by 346–347; sequence RN.

Belongs to the NAD-dependent glycerol-3-phosphate dehydrogenase family.

The protein localises to the cytoplasm. It localises to the cytosol. The catalysed reaction is sn-glycerol 3-phosphate + NAD(+) = dihydroxyacetone phosphate + NADH + H(+). In terms of biological role, may be involved in cell redox homeostasis. The polypeptide is Probable glycerol-3-phosphate dehydrogenase [NAD(+)] 2, cytosolic (Oryza sativa subsp. japonica (Rice)).